A 315-amino-acid polypeptide reads, in one-letter code: L-lactate dehydrogenase (315 aa).

Residues V17, D38, K43, Y69, and 83–84 each bind NAD(+); that span reads GA. Substrate is bound by residues Q86 and R92. NAD(+)-binding positions include S105, 122–124, and S147; that span reads ATN. 124 to 127 provides a ligand contact to substrate; the sequence is NPVD. 152–155 lines the substrate pocket; it reads DTAR. Positions 157 and 172 each coordinate beta-D-fructose 1,6-bisphosphate. H179 acts as the Proton acceptor in catalysis. Residue Y223 is modified to Phosphotyrosine. T232 provides a ligand contact to substrate.

This sequence belongs to the LDH/MDH superfamily. LDH family. As to quaternary structure, homotetramer.

It localises to the cytoplasm. The catalysed reaction is (S)-lactate + NAD(+) = pyruvate + NADH + H(+). It participates in fermentation; pyruvate fermentation to lactate; (S)-lactate from pyruvate: step 1/1. With respect to regulation, allosterically activated by fructose 1,6-bisphosphate (FBP). Functionally, catalyzes the conversion of lactate to pyruvate. The protein is L-lactate dehydrogenase of Macrococcus caseolyticus (strain JCSC5402) (Macrococcoides caseolyticum).